A 299-amino-acid polypeptide reads, in one-letter code: Probable lipid kinase YegS-like (299 aa).

The 132-residue stretch at 2–133 folds into the DAGKc domain; it reads ATFPASLLIL…IDIAQVNDKT (132 aa). ATP contacts are provided by residues threonine 40, 66 to 72, and threonine 95; that span reads GDGTINE. Mg(2+) is bound by residues leucine 215, aspartate 218, and leucine 220. The Proton acceptor role is filled by glutamate 271.

The protein belongs to the diacylglycerol/lipid kinase family. YegS lipid kinase subfamily. Requires Mg(2+) as cofactor. Ca(2+) is required as a cofactor.

Its subcellular location is the cytoplasm. Functionally, probably phosphorylates lipids; the in vivo substrate is unknown. This Citrobacter koseri (strain ATCC BAA-895 / CDC 4225-83 / SGSC4696) protein is Probable lipid kinase YegS-like.